The sequence spans 60 residues: UPF0434 protein Daci_3569 (60 aa).

Belongs to the UPF0434 family.

This Delftia acidovorans (strain DSM 14801 / SPH-1) protein is UPF0434 protein Daci_3569.